The chain runs to 696 residues: Methionine synthase reductase (696 aa).

Positions 4-147 (FLLLYATQRG…VVEPWIDGLW (144 aa)) constitute a Flavodoxin-like domain. FMN is bound by residues 10 to 14 (TQRGQ) and 93 to 124 (LLGL…QRFY). Positions 166 to 245 (TLSRASDAPL…SSLSIPAVPP (80 aa)) are hinge. Ser171 and Ser188 each carry phosphoserine. Residues 269–531 (DPSFQVPISK…PRATNAFHLP (263 aa)) enclose the FAD-binding FR-type domain. Lys289 contacts NADP(+). Residues 449–452 (RPYS) and 485–488 (GVCT) each bind FAD. Residues 608-609 (SR), 622-624 (YVQ), and Asp657 contribute to the NADP(+) site. Position 695 (Trp695) interacts with FAD.

As to quaternary structure, forms a multiprotein complex with MMACHC, MMADHC and MTR. The cofactor is FAD. It depends on FMN as a cofactor.

It is found in the cytoplasm. The enzyme catalyses 2 methylcob(III)alamin-[methionine synthase] + 2 S-adenosyl-L-homocysteine + NADP(+) + H(+) = 2 cob(II)alamin-[methionine synthase] + 2 S-adenosyl-L-methionine + NADPH. The catalysed reaction is 2 cob(II)alamin + A + 2 H2O + 2 H(+) = 2 aquacob(III)alamin + AH2. Its function is as follows. Key enzyme in methionine and folate homeostasis responsible for the reactivation of methionine synthase (MTR/MS) activity by catalyzing the reductive methylation of MTR-bound cob(II)alamin. Cobalamin (vitamin B12) forms a complex with MTR to serve as an intermediary in methyl transfer reactions that cycles between MTR-bound methylcob(III)alamin and MTR bound-cob(I)alamin forms, and occasional oxidative escape of the cob(I)alamin intermediate during the catalytic cycle leads to the inactive cob(II)alamin species. The processing of cobalamin in the cytosol occurs in a multiprotein complex composed of at least MMACHC, MMADHC, MTRR and MTR which may contribute to shuttle safely and efficiently cobalamin towards MTR in order to produce methionine. Also necessary for the utilization of methyl groups from the folate cycle, thereby affecting transgenerational epigenetic inheritance. Also acts as a molecular chaperone for methionine synthase by stabilizing apoMTR and incorporating methylcob(III)alamin into apoMTR to form the holoenzyme. Also serves as an aquacob(III)alamin reductase by reducing aquacob(III)alamin to cob(II)alamin; this reduction leads to stimulation of the conversion of apoMTR and aquacob(III)alamin to MTR holoenzyme. In Mus musculus (Mouse), this protein is Methionine synthase reductase.